A 92-amino-acid polypeptide reads, in one-letter code: Small ribosomal subunit protein uS19 (92 aa).

This sequence belongs to the universal ribosomal protein uS19 family.

Functionally, protein S19 forms a complex with S13 that binds strongly to the 16S ribosomal RNA. This chain is Small ribosomal subunit protein uS19, found in Rickettsia typhi (strain ATCC VR-144 / Wilmington).